The sequence spans 145 residues: Bacilliredoxin SERP1006 (145 aa).

The protein belongs to the bacilliredoxin family.

This Staphylococcus epidermidis (strain ATCC 35984 / DSM 28319 / BCRC 17069 / CCUG 31568 / BM 3577 / RP62A) protein is Bacilliredoxin SERP1006.